The sequence spans 569 residues: Protein ste7 (569 aa).

2 disordered regions span residues 195–219 (APIT…VNSV) and 255–274 (FSVS…SPPI). The span at 198–219 (TTSSATHTSQFSTSSSSSVNSV) shows a compositional bias: low complexity. The segment covering 264–274 (PQTPISMSPPI) has biased composition (pro residues).

It belongs to the arrestin family.

Has a role in promoting meiosis whereby it is involved in establishing the mating pheromone signaling pathway. It also has a role in suppressing meiosis until the conjugation process is complete. The polypeptide is Protein ste7 (ste7) (Schizosaccharomyces pombe (strain 972 / ATCC 24843) (Fission yeast)).